The primary structure comprises 136 residues: UPF0310 protein SMU_442 (136 aa).

This sequence belongs to the UPF0310 family.

This is UPF0310 protein SMU_442 from Streptococcus mutans serotype c (strain ATCC 700610 / UA159).